The sequence spans 323 residues: Mycothiol acetyltransferase (323 aa).

2 consecutive N-acetyltransferase domains span residues 5 to 145 (LTTD…LPLR) and 168 to 323 (VEIR…PEER). E36 contributes to the 1D-myo-inositol 2-(L-cysteinylamino)-2-deoxy-alpha-D-glucopyranoside binding site. 83 to 85 (VAV) is a binding site for acetyl-CoA. Positions 195, 236, and 252 each coordinate 1D-myo-inositol 2-(L-cysteinylamino)-2-deoxy-alpha-D-glucopyranoside. Acetyl-CoA-binding positions include 256–258 (VGV) and 263–269 (QGSGLGR). Y290 is a binding site for 1D-myo-inositol 2-(L-cysteinylamino)-2-deoxy-alpha-D-glucopyranoside. 295 to 300 (NRPAVQ) contacts acetyl-CoA.

This sequence belongs to the acetyltransferase family. MshD subfamily. Monomer.

It carries out the reaction 1D-myo-inositol 2-(L-cysteinylamino)-2-deoxy-alpha-D-glucopyranoside + acetyl-CoA = mycothiol + CoA + H(+). Catalyzes the transfer of acetyl from acetyl-CoA to desacetylmycothiol (Cys-GlcN-Ins) to form mycothiol. This Thermobifida fusca (strain YX) protein is Mycothiol acetyltransferase.